We begin with the raw amino-acid sequence, 217 residues long: Nascent polypeptide-associated complex subunit alpha-like protein 2 (217 aa).

Positions 1 to 81 are disordered; sequence MSPPPAVVTE…SEKKSRKAML (81 aa). Positions 37-60 are enriched in acidic residues; it reads PIVEDVKDDEDDDDDDEEEEDDDA. The 66-residue stretch at 70–135 folds into the NAC-A/B domain; that stretch reads SRSEKKSRKA…AKIEDLSSQL (66 aa). The UBA domain occupies 178 to 215; that stretch reads VEARDIDLVMTQAGVSRSKAVKALKSHDGDIVSAIMEL.

This sequence belongs to the NAC-alpha family.

In terms of biological role, may promote appropriate targeting of ribosome-nascent polypeptide complexes. The polypeptide is Nascent polypeptide-associated complex subunit alpha-like protein 2 (Arabidopsis thaliana (Mouse-ear cress)).